A 627-amino-acid polypeptide reads, in one-letter code: Dual specificity testis-specific protein kinase 1 (627 aa).

The tract at residues 1-36 (MAGERPPLRGPGPGEAPGEGPGGAGGGPGRGRPSSY) is disordered. Gly residues predominate over residues 11–30 (PGPGEAPGEGPGGAGGGPGR). In terms of domain architecture, Protein kinase spans 52–309 (FDCAEKIGAG…TEITQHLEQI (258 aa)). ATP-binding positions include 58-66 (IGAGFFSEV) and Lys81. Residue Asp170 is the Proton acceptor of the active site. Ser215 is modified (phosphoserine; by autocatalysis). Positions 316–330 (ATPLAKPPLTKAPLT) are enriched in low complexity. 4 disordered regions span residues 316 to 373 (ATPL…SWGD), 436 to 485 (RCRS…GLAP), 500 to 519 (CSSASQPWSPRSGPPLNNNP), and 532 to 565 (REPWNRAQHSLPRAAALERTEPSPPPSAPREPEE). Arg338 is modified (omega-N-methylarginine). Residues 348 to 357 (PDPRLSRSRS) show a composition bias toward basic and acidic residues. The required for interaction with YWHAB stretch occupies residues 421–525 (VTTPDILVQP…NNNPPAVVVN (105 aa)). The tract at residues 528–625 (QGWAREPWNR…PTPSLQLPGA (98 aa)) is required for interaction with PARVA. Residues 528–627 (QGWAREPWNR…PSLQLPGARS (100 aa)) are required for interaction with SPRED1 and SPRY2. Required for TESK1-mediated dephosphorylation of SPRY2 and SPRY2 inhibition of ERK phosphorylation.

This sequence belongs to the protein kinase superfamily. TKL Ser/Thr protein kinase family. As to quaternary structure, interacts (via both C- and N-termini) with SPRY4 (via C-terminus); the interaction inhibits TESK1 kinase activity. Interacts with TAOK1; the interaction inhibits TAOK1 kinase activity. Interacts (via C-terminus) with SPRED1 (via C-terminus); the interaction inhibits TESK1 kinase activity. Interacts (via C-terminus) with PARVA/PARVIN (via C-terminus); the interaction inhibits TESK1 kinase activity. Interacts with YWHAB/14-3-3 beta; the interaction is dependent on the phosphorylation of TESK1 Ser-439 and inhibits TESK1 kinase activity. Interacts with SPRY1, SPRY3 and SPRED2. Interacts (via C-terminus) with SPRY2 (via C-terminus); the interaction disrupts SPRY2 interaction with PPP2CA/PP2A-C, possibly by vesicular sequestration of SPRY2. Therefore dephosphorylation of SPRY2 by the serine/threonine-protein phosphatase 2A (PP2A) holoenzyme is lost, inhibiting its interaction with GRB2. Mg(2+) serves as cofactor. Requires Mn(2+) as cofactor. Post-translationally, autophosphorylated on serine and tyrosine residues. In terms of tissue distribution, expressed in testes and brain (at protein level).

The protein resides in the cytoplasm. The protein localises to the perinuclear region. It is found in the cytoskeleton. It localises to the microtubule organizing center. Its subcellular location is the centrosome. The protein resides in the cell projection. The protein localises to the lamellipodium. The catalysed reaction is L-seryl-[protein] + ATP = O-phospho-L-seryl-[protein] + ADP + H(+). It catalyses the reaction L-threonyl-[protein] + ATP = O-phospho-L-threonyl-[protein] + ADP + H(+). It carries out the reaction L-tyrosyl-[protein] + ATP = O-phospho-L-tyrosyl-[protein] + ADP + H(+). Its activity is regulated as follows. Activated by autophosphorylation on Ser-215. Kinase activity is inhibited by SPRED1. Dual specificity protein kinase activity catalyzing autophosphorylation and phosphorylation of exogenous substrates on both serine/threonine and tyrosine residues. Regulates the cellular cytoskeleton by enhancing actin stress fiber formation via phosphorylation of cofilin and by preventing microtubule breakdown via inhibition of TAOK1/MARKK kinase activity. Inhibits podocyte motility via regulation of actin cytoskeletal dynamics and phosphorylation of CFL1. Positively regulates integrin-mediated cell spreading, via phosphorylation of cofilin. Suppresses ciliogenesis via multiple pathways; phosphorylation of CFL1, suppression of ciliary vesicle directional trafficking to the ciliary base, and by facilitating YAP1 nuclear localization where it acts as a transcriptional corepressor of the TEAD4 target genes AURKA and PLK1. Probably plays a central role at and after the meiotic phase of spermatogenesis. This Mus musculus (Mouse) protein is Dual specificity testis-specific protein kinase 1 (Tesk1).